Here is an 83-residue protein sequence, read N- to C-terminus: Small ribosomal subunit protein bS16 (83 aa).

This sequence belongs to the bacterial ribosomal protein bS16 family.

The protein is Small ribosomal subunit protein bS16 of Shewanella denitrificans (strain OS217 / ATCC BAA-1090 / DSM 15013).